Here is a 460-residue protein sequence, read N- to C-terminus: tRNA-splicing endonuclease subunit Sen2 (460 aa).

The segment at 143-215 (EKEETPQHEP…SPSSHNGHVA (73 aa)) is disordered. Residues 159–170 (SSLEGRVEKDEL) show a composition bias toward basic and acidic residues. Active-site residues include tyrosine 364 and histidine 372. Residues serine 403, serine 406, and serine 410 each carry the phosphoserine modification. The active site involves lysine 411.

Belongs to the tRNA-intron endonuclease family. In terms of assembly, tRNA splicing endonuclease is a heterotetramer composed of TSEN2, TSEN15, TSEN34/LENG5 and TSEN54. tRNA splicing endonuclease complex also contains proteins of the pre-mRNA 3'-end processing machinery such as CLP1, CPSF1, CPSF4 and CSTF2.

It is found in the nucleus. The protein localises to the nucleolus. It carries out the reaction pretRNA = a 3'-half-tRNA molecule with a 5'-OH end + a 5'-half-tRNA molecule with a 2',3'-cyclic phosphate end + an intron with a 2',3'-cyclic phosphate and a 5'-hydroxyl terminus.. Functionally, constitutes one of the two catalytic subunit of the tRNA-splicing endonuclease complex, a complex responsible for identification and cleavage of the splice sites in pre-tRNA. It cleaves pre-tRNA at the 5'- and 3'-splice sites to release the intron. The products are an intron and two tRNA half-molecules bearing 2',3'-cyclic phosphate and 5'-OH termini. There are no conserved sequences at the splice sites, but the intron is invariably located at the same site in the gene, placing the splice sites an invariant distance from the constant structural features of the tRNA body. Probably carries the active site for 5'-splice site cleavage. The tRNA splicing endonuclease is also involved in mRNA processing via its association with pre-mRNA 3'-end processing factors, establishing a link between pre-tRNA splicing and pre-mRNA 3'-end formation, suggesting that the endonuclease subunits function in multiple RNA-processing events. This Mus musculus (Mouse) protein is tRNA-splicing endonuclease subunit Sen2 (Tsen2).